A 349-amino-acid polypeptide reads, in one-letter code: Protein RecA (349 aa).

65–72 serves as a coordination point for ATP; the sequence is GPESSGKT. The interval 329-349 is disordered; it reads KASDQTAAHDETEEEPDLLES. Residues 339-349 show a composition bias toward acidic residues; the sequence is ETEEEPDLLES.

Belongs to the RecA family.

It is found in the cytoplasm. Its function is as follows. Can catalyze the hydrolysis of ATP in the presence of single-stranded DNA, the ATP-dependent uptake of single-stranded DNA by duplex DNA, and the ATP-dependent hybridization of homologous single-stranded DNAs. It interacts with LexA causing its activation and leading to its autocatalytic cleavage. The polypeptide is Protein RecA (Acinetobacter baylyi (strain ATCC 33305 / BD413 / ADP1)).